We begin with the raw amino-acid sequence, 278 residues long: MSLKSFKPVTPSNRYKVWPSFDEITTSTPEKSLCRPLKKSGGRNNNGRITTRHIGGGHKRKYRLVDFKRNKFDVPATVLTIEYDPNRTCRIALIEYKDGEKSYILAPTGLQVGMKVESGQKVAPKVGNAMPLKNVPLGTSVHNIEIRPGSGGKVARAAGQQAIVSNREAGYALIKMPSGEIRRFNEDCYCTIGQVGNTQHMNEMSGKAGRTRWMGVRPTVRGMTMNPVDHPNGGGEGKSKSGGGRQHLKSPWGHVKGQKTRRLRKPSDSVIVQRRNAK.

Disordered stretches follow at residues 32-54 and 221-278; these read SLCR…TRHI and RGMT…RNAK. A compositionally biased stretch (gly residues) spans 232–245; that stretch reads NGGGEGKSKSGGGR.

The protein belongs to the universal ribosomal protein uL2 family. In terms of assembly, part of the 50S ribosomal subunit. Forms a bridge to the 30S subunit in the 70S ribosome.

Functionally, one of the primary rRNA binding proteins. Required for association of the 30S and 50S subunits to form the 70S ribosome, for tRNA binding and peptide bond formation. It has been suggested to have peptidyltransferase activity; this is somewhat controversial. Makes several contacts with the 16S rRNA in the 70S ribosome. The chain is Large ribosomal subunit protein uL2 from Akkermansia muciniphila (strain ATCC BAA-835 / DSM 22959 / JCM 33894 / BCRC 81048 / CCUG 64013 / CIP 107961 / Muc).